The chain runs to 723 residues: Polyribonucleotide nucleotidyltransferase (723 aa).

The Mg(2+) site is built by aspartate 488 and aspartate 494. The region spanning proline 555–isoleucine 614 is the KH domain. In terms of domain architecture, S1 motif spans glycine 624 to lysine 692. Residues lysine 692–lysine 723 form a disordered region. The segment covering alanine 693–lysine 723 has biased composition (basic and acidic residues).

The protein belongs to the polyribonucleotide nucleotidyltransferase family. It depends on Mg(2+) as a cofactor.

The protein resides in the cytoplasm. The enzyme catalyses RNA(n+1) + phosphate = RNA(n) + a ribonucleoside 5'-diphosphate. In terms of biological role, involved in mRNA degradation. Catalyzes the phosphorolysis of single-stranded polyribonucleotides processively in the 3'- to 5'-direction. The sequence is that of Polyribonucleotide nucleotidyltransferase from Listeria monocytogenes serovar 1/2a (strain ATCC BAA-679 / EGD-e).